A 398-amino-acid polypeptide reads, in one-letter code: uncharacterized protein (398 aa).

This sequence belongs to the glycosyltransferase 2 family.

This is an uncharacterized protein from Escherichia coli (strain K12).